The following is a 252-amino-acid chain: MILYEYPFNERIRTLLRLEDLFERLDFFLVQEHPLQHHVALTTLFEVVDVAGRADLKSDLLKELDRQRQTLTALRANPQIDQDALDAVISELETASGNLTATHGKAGQLIADNEWLTSIRSRAIIPGGTCEFDLPAYFAWQHHPAERRRADIIKWAQPLVPLRDATMIVLRLLRESGQSGKVIANAGSYQQMLSGRVYQLMQVRLDESALGFIPEISANKYMLWVRFTQQDGDLRPKPVDADIPFQLKLCNF.

Belongs to the ZapD family. As to quaternary structure, interacts with FtsZ.

It localises to the cytoplasm. Functionally, cell division factor that enhances FtsZ-ring assembly. Directly interacts with FtsZ and promotes bundling of FtsZ protofilaments, with a reduction in FtsZ GTPase activity. The sequence is that of Cell division protein ZapD from Ralstonia pickettii (strain 12J).